The following is a 528-amino-acid chain: MALKNKDISSIIKERIRNYKIEKINDEVGKVISIGDGIALVSGLKNVKNGELIIFNESVYGLTLNLEIDYIGVAILGNDTLLKEGDEAKRTFEVISIKVGPEILGRVINALGEPIDGKGEIDSEIHRQIFRVAPGVMARESVNEALSTGILAIDSMIPIGKGQRELIIGDRQTGKTAIAIDAIINQKGKNVKCIYVAIGQKNSTVAQIVRKLENHGAMEYTSVVSASASELSPMQYLAPYTGVTIAEEFMETGQDVLIVYDDLSKHAVAYRTLSLLLRRPPGREAYPGDVFYLHSQLLERAAKVNKENGGGSITALPIIETQQGDISAYIATNVISITDGQIFTKESLFNSGQRPAIDVGFSVSRVGSSAQISAMKEVTSSLKLQLAQYNEMLAFSQFGSDLDDSTKAILENGSKIYEILKQDQYSPIDQYTQVILFLAIKQNLINPIPLEYISKFKKAIIHKFNKDAKALNLKTLIRNDKKLSTKLRNEITKIIIEEIKNITKSIANYNPKDHRPIPEEYAKLVESK.

169 to 176 is a binding site for ATP; that stretch reads GDRQTGKT.

The protein belongs to the ATPase alpha/beta chains family. As to quaternary structure, F-type ATPases have 2 components, CF(1) - the catalytic core - and CF(0) - the membrane proton channel. CF(1) has five subunits: alpha(3), beta(3), gamma(1), delta(1), epsilon(1). CF(0) has three main subunits: a(1), b(2) and c(9-12). The alpha and beta chains form an alternating ring which encloses part of the gamma chain. CF(1) is attached to CF(0) by a central stalk formed by the gamma and epsilon chains, while a peripheral stalk is formed by the delta and b chains.

Its subcellular location is the cell membrane. It catalyses the reaction ATP + H2O + 4 H(+)(in) = ADP + phosphate + 5 H(+)(out). Its function is as follows. Produces ATP from ADP in the presence of a proton gradient across the membrane. The alpha chain is a regulatory subunit. This is ATP synthase subunit alpha 1 from Mycoplasmopsis pulmonis (strain UAB CTIP) (Mycoplasma pulmonis).